The primary structure comprises 145 residues: Transcription antitermination protein NusB (145 aa).

This sequence belongs to the NusB family.

Functionally, involved in transcription antitermination. Required for transcription of ribosomal RNA (rRNA) genes. Binds specifically to the boxA antiterminator sequence of the ribosomal RNA (rrn) operons. The sequence is that of Transcription antitermination protein NusB from Paraburkholderia phymatum (strain DSM 17167 / CIP 108236 / LMG 21445 / STM815) (Burkholderia phymatum).